The sequence spans 151 residues: Transcriptional regulator MraZ (151 aa).

2 SpoVT-AbrB domains span residues 5–52 and 81–124; these read ATAV…PLMN and ATEC…SDVE.

Belongs to the MraZ family. As to quaternary structure, forms oligomers.

The protein resides in the cytoplasm. It is found in the nucleoid. This chain is Transcriptional regulator MraZ, found in Haemophilus influenzae (strain PittGG).